The primary structure comprises 198 residues: Synaptobrevin homolog YKT6-B (198 aa).

The Longin domain occupies 8 to 127 (VLYKGENKVH…IQYNALDSYL (120 aa)). A v-SNARE coiled-coil homology domain is found at 138–198 (PMSKVQAELD…RKQNSCCDIM (61 aa)). C194 carries S-palmitoyl cysteine lipidation. The residue at position 195 (C195) is a Cysteine methyl ester. C195 carries the S-farnesyl cysteine lipid modification. Residues 196–198 (DIM) constitute a propeptide, removed in mature form.

Belongs to the synaptobrevin family. Post-translationally, palmitoylated; catalyzes its own palmitoylation. Palmitoylation is required for Golgi targeting. In terms of processing, farnesylation is required for Golgi targeting.

The protein localises to the cytoplasm. The protein resides in the cytosol. Its subcellular location is the cytoplasmic vesicle membrane. It is found in the golgi apparatus membrane. Its function is as follows. Vesicular soluble NSF attachment protein receptor (v-SNARE) mediating vesicle docking and fusion to a specific acceptor cellular compartment. Functions in endoplasmic reticulum to Golgi transport; as part of a SNARE complex composed of GOSR1, GOSR2 and STX5. Functions in early/recycling endosome to TGN transport; as part of a SNARE complex composed of BET1L, GOSR1 and STX5. Has a S-palmitoyl transferase activity. The protein is Synaptobrevin homolog YKT6-B (ykt6-b) of Xenopus laevis (African clawed frog).